Here is a 149-residue protein sequence, read N- to C-terminus: Large ribosomal subunit protein uL24 (149 aa).

Residues 114–149 are disordered; sequence RKIIERSGGTPEVEAVPEKSEEEKEEKEKEEEKSEE. Basic and acidic residues predominate over residues 129 to 149; the sequence is VPEKSEEEKEEKEKEEEKSEE.

It belongs to the universal ribosomal protein uL24 family. As to quaternary structure, part of the 50S ribosomal subunit.

Its function is as follows. One of two assembly initiator proteins, it binds directly to the 5'-end of the 23S rRNA, where it nucleates assembly of the 50S subunit. Located at the polypeptide exit tunnel on the outside of the subunit. This chain is Large ribosomal subunit protein uL24, found in Methanopyrus kandleri (strain AV19 / DSM 6324 / JCM 9639 / NBRC 100938).